A 65-amino-acid polypeptide reads, in one-letter code: Photosystem II reaction center protein J (65 aa).

The segment covering 1-18 (MSSKLKGPDGRLPDRLPD) has biased composition (basic and acidic residues). The interval 1–21 (MSSKLKGPDGRLPDRLPDGRP) is disordered. A helical membrane pass occupies residues 36–56 (LWLVATAGGIAVIFVLGIFFY).

Belongs to the PsbJ family. In terms of assembly, PSII is composed of 1 copy each of membrane proteins PsbA, PsbB, PsbC, PsbD, PsbE, PsbF, PsbH, PsbI, PsbJ, PsbK, PsbL, PsbM, PsbT, PsbX, PsbY, Psb30/Ycf12, peripheral proteins PsbO, CyanoQ (PsbQ), PsbU, PsbV and a large number of cofactors. It forms dimeric complexes.

The protein resides in the cellular thylakoid membrane. Its function is as follows. One of the components of the core complex of photosystem II (PSII). PSII is a light-driven water:plastoquinone oxidoreductase that uses light energy to abstract electrons from H(2)O, generating O(2) and a proton gradient subsequently used for ATP formation. It consists of a core antenna complex that captures photons, and an electron transfer chain that converts photonic excitation into a charge separation. In Prochlorococcus marinus (strain SARG / CCMP1375 / SS120), this protein is Photosystem II reaction center protein J.